Consider the following 754-residue polypeptide: NAD(P)H-quinone oxidoreductase subunit 5, chloroplastic (754 aa).

Helical transmembrane passes span 8-28, 40-60, 89-109, 125-145, 147-167, 185-205, 219-239, 258-278, 280-300, 327-347, 354-374, 396-416, 425-445, 552-572, 608-628, and 733-753; these read FWIITFISLPVPILIGVGLLL, WVFPSVLLLSIIMLFSTYLAI, VDPLTSIMLILITTVGILVLI, FAYMSFFNTSMVGLVTSSNLI, IYFFWELVGMCSYLLIGFWFT, GDFGLLLGILGFYWITGSLEF, NEVNLLFATLCAFLLFAGAIA, TPISALIHAATMVAAGIFLGA, LLPLFIVMPYIMNLIALLGII, LGYMMLALGMGSYRAALFHLI, ALLFLGSGSIIHSMESIVGYS, TSFLLGTLSLCGIPPLGCFWS, WLYSPIFAIIAFSTAGLTAFY, FSMLVLGLFTLFIGIIGIPFF, FITNATYSVSIASFGILIASF, and LVYISYVLIFLLIYSRGVLFF.

Belongs to the complex I subunit 5 family. In terms of assembly, NDH is composed of at least 16 different subunits, 5 of which are encoded in the nucleus.

It is found in the plastid. The protein localises to the chloroplast thylakoid membrane. It carries out the reaction a plastoquinone + NADH + (n+1) H(+)(in) = a plastoquinol + NAD(+) + n H(+)(out). It catalyses the reaction a plastoquinone + NADPH + (n+1) H(+)(in) = a plastoquinol + NADP(+) + n H(+)(out). Functionally, NDH shuttles electrons from NAD(P)H:plastoquinone, via FMN and iron-sulfur (Fe-S) centers, to quinones in the photosynthetic chain and possibly in a chloroplast respiratory chain. The immediate electron acceptor for the enzyme in this species is believed to be plastoquinone. Couples the redox reaction to proton translocation, and thus conserves the redox energy in a proton gradient. The sequence is that of NAD(P)H-quinone oxidoreductase subunit 5, chloroplastic (ndhF) from Morus indica (Mulberry).